We begin with the raw amino-acid sequence, 818 residues long: Cation/H(+) antiporter 6A (818 aa).

The next 13 membrane-spanning stretches (helical) occupy residues 51-71 (NFWEYPLPNLEILIFSTFFIW), 88-110 (FTYMMIAGIILGQTCHFSNKSWI), 123-143 (VAETLGAFGFVLYWFLKGVTM), 156-176 (SVIGFITVIIPLICGSLTFRY), 192-212 (LIIFLQSISAFTSIDTLLKDL), 222-242 (IALSGAMVTDMLAFGVTFFNA), 248-268 (LYGFMQTVGFCLFVVVMICVV), 288-308 (FYLYSIFGIAFACFTFFNKVI), 310-330 (LFGPAGSFVFGLTVPNGYPLG), 340-360 (FNLGSILPLFGSLTMMQVDLL), 376-396 (IYEVISFILLVNTTKFVVTTI), 409-429 (FALALVLSNKGIFELAYYTYA), and 438-458 (EVFTILAAYTLLNSIFIPMLL).

Belongs to the monovalent cation:proton antiporter 2 (CPA2) transporter (TC 2.A.37) family. CHX (TC 2.A.37.4) subfamily. As to expression, preferentially expressed in pollen.

It is found in the membrane. Its function is as follows. May operate as a cation/H(+) antiporter. This chain is Cation/H(+) antiporter 6A (CHX6a), found in Arabidopsis thaliana (Mouse-ear cress).